A 227-amino-acid polypeptide reads, in one-letter code: Urease accessory protein UreF (227 aa).

Belongs to the UreF family. As to quaternary structure, ureD, UreF and UreG form a complex that acts as a GTP-hydrolysis-dependent molecular chaperone, activating the urease apoprotein by helping to assemble the nickel containing metallocenter of UreC. The UreE protein probably delivers the nickel.

Its subcellular location is the cytoplasm. Its function is as follows. Required for maturation of urease via the functional incorporation of the urease nickel metallocenter. The protein is Urease accessory protein UreF of Actinobacillus pleuropneumoniae serotype 3 (strain JL03).